The sequence spans 408 residues: Alpha-2Da adrenergic receptor (408 aa).

Residues 1–30 are Extracellular-facing; that stretch reads MSVTPTANSTEEAANITASPRLWPYTEPAS. Residues Asn-8 and Asn-15 are each glycosylated (N-linked (GlcNAc...) asparagine). Residues 31-55 traverse the membrane as a helical segment; sequence AIIILVVSLIILLTIVGNVLVIVAV. The Cytoplasmic portion of the chain corresponds to 56-67; it reads LTSRALRAPQNL. The helical transmembrane segment at 68–93 threads the bilayer; it reads FLVSLACADILVATLVIPFSLANEIM. The Extracellular portion of the chain corresponds to 94-103; it reads GYWYFGSTWC. Cys-103 and Cys-176 are oxidised to a cystine. The chain crosses the membrane as a helical span at residues 104–126; that stretch reads AFYLALDVLFCTSSIVHLCAISL. Residues 127–147 are Cytoplasmic-facing; the sequence is DRYWSVTKAVRYNLKRTPRRI. A helical transmembrane segment spans residues 148–170; that stretch reads KCMIAVVWLISAVISFPPLIMTK. Over 171 to 181 the chain is Extracellular; that stretch reads HDEKECLINDE. The chain crosses the membrane as a helical span at residues 182–205; the sequence is TWYILSSCAVSFFAPGLIMITVYC. The Cytoplasmic portion of the chain corresponds to 206–332; it reads KIYRVAKQRS…QMREKRFTFV (127 aa). Residues 242–306 form a disordered region; that stretch reads FEKESPSSNS…SCRVSWAAHQ (65 aa). Residues 260–270 are compositionally biased toward acidic residues; it reads ELDDIDLEESA. Residues 277 to 286 are compositionally biased toward basic residues; sequence RGSRFSKRRR. The helical transmembrane segment at 333–356 threads the bilayer; that stretch reads LAVVMGVFVLCWFPFFFTYSLQAV. Over 357–369 the chain is Extracellular; that stretch reads CGERCGPPEALFK. A helical transmembrane segment spans residues 370 to 390; sequence LFFWIGYCNSSVNPIIYTIFN. Over 391-408 the chain is Cytoplasmic; the sequence is RDFRKAFKKVVCWSAQRT.

Belongs to the G-protein coupled receptor 1 family. Adrenergic receptor subfamily. ADRA2D sub-subfamily.

It is found in the cell membrane. Its function is as follows. Alpha-2 adrenergic receptors mediate the catecholamine-induced inhibition of adenylate cyclase through the action of G proteins. The order of potency for this receptor is dexmedetomidine &gt; norepinephrine &gt; epinephrine &gt; oxymetazoline. This Danio rerio (Zebrafish) protein is Alpha-2Da adrenergic receptor (adra2da).